The primary structure comprises 472 residues: uncharacterized protein (472 aa).

Transmembrane regions (helical) follow at residues 14 to 34, 53 to 73, 80 to 100, 113 to 133, 142 to 162, 169 to 189, 202 to 222, 227 to 247, 263 to 283, 302 to 322, 333 to 353, 359 to 379, 405 to 427, and 437 to 457; these read VIVGILLAGAFVAILNQTLLI, WLTTSFMLTNGILIPITAFLI, ALLITAMSIFTAGTVVGAFAP, AAGAGIMMPLMQTVFLTIFPI, MVGLVISFAPAIGPTLSGWAV, SLFYIILPFAVIDLILASILM, ILSVILSTFGFGGLLYGFSSV, WSSSTVLISLLVGVIALLLFI, FTFGVFSLTTLLGTLVFALLI, FDTGLMLLPGAVVMGFMSPII, GLAIAGFCIIFLTSLPFMQLT, AWIVVLYTVRLLGTAMIMMPV, VGGSIGTALLVSVMSNQAAHAGT, and GMNAAFIVAAVIALVGFLLSF.

It belongs to the major facilitator superfamily. EmrB family.

The protein resides in the cell membrane. This is an uncharacterized protein from Bacillus subtilis (strain 168).